Reading from the N-terminus, the 187-residue chain is dCTP deaminase (187 aa).

Residues 110 to 115 (KSTYAR), 134 to 136 (TLE), Gln155, Tyr169, and Gln179 each bind dCTP. Glu136 serves as the catalytic Proton donor/acceptor.

This sequence belongs to the dCTP deaminase family. As to quaternary structure, homotrimer.

The enzyme catalyses dCTP + H2O + H(+) = dUTP + NH4(+). It participates in pyrimidine metabolism; dUMP biosynthesis; dUMP from dCTP (dUTP route): step 1/2. Its function is as follows. Catalyzes the deamination of dCTP to dUTP. The polypeptide is dCTP deaminase (Bordetella petrii (strain ATCC BAA-461 / DSM 12804 / CCUG 43448)).